A 345-amino-acid chain; its full sequence is uncharacterized protein (345 aa).

Transmembrane regions (helical) follow at residues 23–43 (VVGF…YSYV) and 56–76 (FLIA…FVAL). The interval 326–345 (VTEPTTNSKRKPVKAKKAKK) is disordered. The segment covering 333 to 345 (SKRKPVKAKKAKK) has biased composition (basic residues).

It is found in the cell membrane. This is an uncharacterized protein from Mycoplasma pneumoniae (strain ATCC 29342 / M129 / Subtype 1) (Mycoplasmoides pneumoniae).